We begin with the raw amino-acid sequence, 173 residues long: Thiol-disulfide oxidoreductase ResA (173 aa).

Residues 10 to 29 form a helical; Signal-anchor for type II membrane protein membrane-spanning segment; the sequence is VIILLILSGAVGFTLYQGFF. In terms of domain architecture, Thioredoxin spans 35–173; it reads MQIGKEAPNF…LEGYLKKITP (139 aa). Cys-73 and Cys-76 are joined by a disulfide.

The protein belongs to the thioredoxin family. ResA subfamily.

It is found in the cell membrane. It participates in protein modification; cytochrome c assembly. Its function is as follows. Thiol-disulfide oxidoreductase which is required in disulfide reduction during c-type cytochrome synthesis. May accept reducing equivalents from CcdA, leading to breakage of disulfide bonds in apocytochrome c; following this reduction heme can be covalently attached. This is Thiol-disulfide oxidoreductase ResA from Bacillus thuringiensis (strain Al Hakam).